The sequence spans 83 residues: MFLQAVTSPISINSLMVLAAYVLLGGLYLIVVPLLLYSWMNRRWHCMGKFERLSAYGMVFLFFPGLILFAPFLNLRLNGQGEV.

The next 2 helical transmembrane spans lie at 15-35 (LMVL…VPLL) and 53-73 (LSAY…APFL).

The protein belongs to the complex I NdhL subunit family. As to quaternary structure, NDH-1 can be composed of about 15 different subunits; different subcomplexes with different compositions have been identified which probably have different functions.

Its subcellular location is the cellular thylakoid membrane. The catalysed reaction is a plastoquinone + NADH + (n+1) H(+)(in) = a plastoquinol + NAD(+) + n H(+)(out). It catalyses the reaction a plastoquinone + NADPH + (n+1) H(+)(in) = a plastoquinol + NADP(+) + n H(+)(out). In terms of biological role, NDH-1 shuttles electrons from an unknown electron donor, via FMN and iron-sulfur (Fe-S) centers, to quinones in the respiratory and/or the photosynthetic chain. The immediate electron acceptor for the enzyme in this species is believed to be plastoquinone. Couples the redox reaction to proton translocation, and thus conserves the redox energy in a proton gradient. Cyanobacterial NDH-1 also plays a role in inorganic carbon-concentration. This is NAD(P)H-quinone oxidoreductase subunit L from Prochlorococcus marinus (strain MIT 9303).